The following is a 315-amino-acid chain: Sulfate adenylyltransferase subunit 2 1 (315 aa).

Positions 287 to 315 (DSSSSERQGRAIDHDQSGSMERKKREGYF) are disordered. A compositionally biased stretch (basic and acidic residues) spans 293–315 (RQGRAIDHDQSGSMERKKREGYF).

It belongs to the PAPS reductase family. CysD subfamily. As to quaternary structure, heterodimer composed of CysD, the smaller subunit, and CysN.

It carries out the reaction sulfate + ATP + H(+) = adenosine 5'-phosphosulfate + diphosphate. It functions in the pathway sulfur metabolism; hydrogen sulfide biosynthesis; sulfite from sulfate: step 1/3. Its function is as follows. With CysN forms the ATP sulfurylase (ATPS) that catalyzes the adenylation of sulfate producing adenosine 5'-phosphosulfate (APS) and diphosphate, the first enzymatic step in sulfur assimilation pathway. APS synthesis involves the formation of a high-energy phosphoric-sulfuric acid anhydride bond driven by GTP hydrolysis by CysN coupled to ATP hydrolysis by CysD. This chain is Sulfate adenylyltransferase subunit 2 1, found in Alkalilimnicola ehrlichii (strain ATCC BAA-1101 / DSM 17681 / MLHE-1).